A 338-amino-acid polypeptide reads, in one-letter code: CRISPR-associated endonuclease Cas1 (338 aa).

The Mn(2+) site is built by Glu-165, His-230, and Glu-245.

The protein belongs to the CRISPR-associated endonuclease Cas1 family. As to quaternary structure, homodimer, forms a heterotetramer with a Cas2 homodimer. It depends on Mg(2+) as a cofactor. Requires Mn(2+) as cofactor.

Functionally, CRISPR (clustered regularly interspaced short palindromic repeat), is an adaptive immune system that provides protection against mobile genetic elements (viruses, transposable elements and conjugative plasmids). CRISPR clusters contain spacers, sequences complementary to antecedent mobile elements, and target invading nucleic acids. CRISPR clusters are transcribed and processed into CRISPR RNA (crRNA). Acts as a dsDNA endonuclease. Involved in the integration of spacer DNA into the CRISPR cassette. The polypeptide is CRISPR-associated endonuclease Cas1 (Fusobacterium nucleatum subsp. nucleatum (strain ATCC 25586 / DSM 15643 / BCRC 10681 / CIP 101130 / JCM 8532 / KCTC 2640 / LMG 13131 / VPI 4355)).